Reading from the N-terminus, the 441-residue chain is Deoxyguanosinetriphosphate triphosphohydrolase-like protein (441 aa).

Positions 1–27 (MTSSVWQERRHGEDKQRRNDHRSPYQR) are disordered. The segment covering 7-27 (QERRHGEDKQRRNDHRSPYQR) has biased composition (basic and acidic residues). One can recognise an HD domain in the interval 59-252 (RLTHSLEVSQ…MELADDIAYA (194 aa)).

This sequence belongs to the dGTPase family. Type 2 subfamily.

In Shewanella oneidensis (strain ATCC 700550 / JCM 31522 / CIP 106686 / LMG 19005 / NCIMB 14063 / MR-1), this protein is Deoxyguanosinetriphosphate triphosphohydrolase-like protein.